Here is a 401-residue protein sequence, read N- to C-terminus: Carboxybiotin decarboxylase (401 aa).

The next 10 helical transmembrane spans lie at 20-40, 46-66, 70-90, 107-127, 131-151, 173-193, 244-264, 275-295, 306-326, and 380-400; these read VISITRIALIIFGFFLSYFGF, PLIMVPMGLGMIAINAGVLFL, VVGTIHLDPLVSEPSVLVNLM, LIACIVFFGIGAMSDISFILI, ASIIVALFAEMGTFATLIIGI, MVLFASLILAKDLFVPIAIIA, LCLLLPVASPLILSFFLGIAI, LLETTLTYGSTLFLGLLLGAL, ISLIVVLGITALLISGIGGVL, and VCGLIVSAIATGVFISTLFLL.

It is found in the cell membrane. It carries out the reaction N(6)-carboxybiotinyl-L-lysyl-[protein] + n Na(+)(in) + H(+) = N(6)-biotinyl-L-lysyl-[protein] + n Na(+)(out) + CO2. Beta subunit of the biotin-dependent malonate decarboxylase multienzyme complex (EC 7.2.4.4). Acts as an integral membrane-bound carboxybiotin protein decarboxylase by releasing the carboxyl group of the carboxylated biotin carrier MADF. The free energy of the decarboxylation reaction is used to pump Na(+) out of the cell. The protein is Carboxybiotin decarboxylase (madB) of Malonomonas rubra.